Consider the following 330-residue polypeptide: Putative [LysW]-L-2-aminoadipate/[LysW]-L-glutamate phosphate reductase (330 aa).

10–13 (SGYI) provides a ligand contact to NADP(+). Residue C142 is part of the active site. N297 serves as a coordination point for NADP(+).

Belongs to the NAGSA dehydrogenase family. Type 1 subfamily. LysY sub-subfamily.

Its subcellular location is the cytoplasm. The enzyme catalyses [amino-group carrier protein]-C-terminal-N-(1-carboxy-5-oxopentan-1-yl)-L-glutamine + phosphate + NADP(+) = [amino-group carrier protein]-C-terminal-N-(1-carboxy-5-phosphooxy-5-oxopentan-1-yl)-L-glutamine + NADPH + H(+). The catalysed reaction is [amino-group carrier protein]-C-terminal-gamma-(L-glutamyl-5-semialdehyde)-L-glutamate + phosphate + NADP(+) = [amino-group carrier protein]-C-terminal-gamma-(5-phospho-L-glutamyl)-L-glutamate + NADPH + H(+). It participates in amino-acid biosynthesis; L-lysine biosynthesis via AAA pathway; L-lysine from L-alpha-aminoadipate (Thermus route): step 3/5. It functions in the pathway amino-acid biosynthesis; L-arginine biosynthesis. Functionally, involved in both the arginine and lysine biosynthetic pathways. The chain is Putative [LysW]-L-2-aminoadipate/[LysW]-L-glutamate phosphate reductase from Pyrococcus furiosus (strain ATCC 43587 / DSM 3638 / JCM 8422 / Vc1).